The following is a 162-amino-acid chain: Cytochrome c-type biogenesis protein CcmE (162 aa).

Residues 1-8 lie on the Cytoplasmic side of the membrane; the sequence is MNPVRKKR. A helical; Signal-anchor for type II membrane protein transmembrane segment spans residues 9-29; the sequence is LIIVLAIVVGVGAAVGLALSA. Residues 30 to 162 lie on the Periplasmic side of the membrane; sequence LQQNINLFYT…GETSYNQEGK (133 aa). His-124 and Tyr-128 together coordinate heme. The segment covering 139–148 has biased composition (basic and acidic residues); the sequence is DSGQLKHYEN. Positions 139 to 162 are disordered; sequence DSGQLKHYENGKAAGETSYNQEGK.

It belongs to the CcmE/CycJ family.

The protein resides in the cell inner membrane. Its function is as follows. Heme chaperone required for the biogenesis of c-type cytochromes. Transiently binds heme delivered by CcmC and transfers the heme to apo-cytochromes in a process facilitated by CcmF and CcmH. In Pseudomonas aeruginosa (strain LESB58), this protein is Cytochrome c-type biogenesis protein CcmE.